Reading from the N-terminus, the 460-residue chain is MLLSFYFNGLLLVGCLLSWGRSDTEGQCHSFTDLNIHNSIIGTALKVQLLLYTPENPKCAQDLNEDNSTGFQYLNVTRKTVFITHGYRPTGSPPVWIDNIVTKFLDIQDFNVILVDWNRGATTVLYHNAAAKTRKVADILKRLIDNMLSQGATLDSIYMVGVSLGAHISGFVGKMYNGSIGRITGLDPAGPLFNGKPPEERLHYTDAQFVDVVHTDTDGLGYKESLGHIDFYPNGGTDQPGCPKTILSGSEYFKCDHQRSVFLYIASLTNNGDLVGFPCKSYRDYRIGNCTNCKEFLPLSCPVFGFYADKWKDHLVKKNPPGTKAFFDTAAKDPFCIFHYYLDIMTWSSQTRRGYITIRLMSLNGNVTESKLDKDHATFEQYKEVSLLAKFDQDLDPMTRISVTFTTGSVIGPKFKLRVLRMRLRPLTNTNRPILCRYDFVLLENVEMEFNPIPCEDTNL.

The signal sequence occupies residues 1-26 (MLLSFYFNGLLLVGCLLSWGRSDTEG). N-linked (GlcNAc...) asparagine glycosylation is found at Asn-67 and Asn-75. Ser-163 serves as the catalytic Nucleophile. A glycan (N-linked (GlcNAc...) asparagine) is linked at Asn-177. The active-site Charge relay system is Asp-187. Residues Cys-242 and Cys-255 are joined by a disulfide bond. His-257 acts as the Charge relay system in catalysis. 2 cysteine pairs are disulfide-bonded: Cys-279-Cys-290 and Cys-293-Cys-301. N-linked (GlcNAc...) asparagine glycosylation occurs at Asn-289. An N-linked (GlcNAc...) asparagine glycan is attached at Asn-366. A disulfide bridge links Cys-436 with Cys-455.

Belongs to the AB hydrolase superfamily. Lipase family.

Its subcellular location is the secreted. It localises to the cell membrane. It carries out the reaction 1-hexadecanoyl-2-(9Z-octadecenoyl)-sn-glycero-3-phosphate + H2O = 2-(9Z-octadecenoyl)-sn-glycero-3-phosphate + hexadecanoate + H(+). Functionally, hydrolyzes specifically phosphatidic acid (PA) to produce 2-acyl lysophosphatidic acid (LPA; a potent bioactive lipid mediator) and fatty acid. Does not hydrolyze other phospholipids, like phosphatidylserine (PS), phosphatidylcholine (PC) and phosphatidylethanolamine (PE) or triacylglycerol (TG). The chain is Lipase member H-B (liph-b) from Xenopus laevis (African clawed frog).